The primary structure comprises 291 residues: Undecaprenyl-diphosphatase (291 aa).

8 consecutive transmembrane segments (helical) span residues 1-21 (MFIIELIKGIILGVVEGLTEF), 48-68 (SAFTFKIVIQLGSVFAAAWVF), 102-122 (LHVLVGMVPAGILGLLFDDFI), 126-146 (LFSVPTVMIGLFVGAIYMIIA), 162-182 (INYFQAFVIGISQAVAMWPGF), 203-223 (SDFTFIMAVPIMLAASGLSLL), 236-256 (FYILGFLAAFTVGLIAIKTFL), and 267-287 (FAIYRIVLVIFIAILYFGFGI).

The protein belongs to the UppP family.

It is found in the cell membrane. The enzyme catalyses di-trans,octa-cis-undecaprenyl diphosphate + H2O = di-trans,octa-cis-undecaprenyl phosphate + phosphate + H(+). Catalyzes the dephosphorylation of undecaprenyl diphosphate (UPP). Confers resistance to bacitracin. This Staphylococcus aureus (strain MSSA476) protein is Undecaprenyl-diphosphatase.